A 216-amino-acid polypeptide reads, in one-letter code: Ribonuclease HII (216 aa).

Positions 28 to 216 (ACIAGIDEAG…GVKEYVRSEE (189 aa)) constitute an RNase H type-2 domain. A divalent metal cation is bound by residues aspartate 34, glutamate 35, and aspartate 126.

This sequence belongs to the RNase HII family. Requires Mn(2+) as cofactor. It depends on Mg(2+) as a cofactor.

The protein localises to the cytoplasm. It carries out the reaction Endonucleolytic cleavage to 5'-phosphomonoester.. Functionally, endonuclease that specifically degrades the RNA of RNA-DNA hybrids. This Geotalea uraniireducens (strain Rf4) (Geobacter uraniireducens) protein is Ribonuclease HII.